Consider the following 450-residue polypeptide: MLSILWNLAAFIIALGVLITVHEFGHFWVARRCGVRVERFSIGFGKALWRRTDRYGTEYVIALIPLGGYVKMLDERAEPVAPELRRHAFNNKTVGQRAAIIAAGPVANFIFAIFAYWLVFIIGVPGVRPVIGEITPNSIAAQAQIAPGTELKAVDGIETPDWDAVRLQLVSKIGDQQTTVSVAPFGSDQRQDKTLDLRHWAFEPDKQDPVSSLGIRPRGPQIEPVLSEVQANSAASKAGLQAGDRIVKVDGQPLTQWMKFVTFVRDNPGKPLALEIERQGSALSLTLTPDTKSVNGKAEGFAGVVPKIIPLPEEYKTIRQYGPFSAILEATDKTWQLMKLTVSMLGKLITGDVKLNNLSGPISIAQGAGMSAEFGVIYYLMFLALISVNLGIINLFPLPVLDGGHLLFLAIEKLKGGPVSERVQDFSYRIGSILLVLLMGLALFNDFSRL.

The helical transmembrane segment at 1–21 (MLSILWNLAAFIIALGVLITV) threads the bilayer. Histidine 22 lines the Zn(2+) pocket. The Periplasmic portion of the chain corresponds to 22–103 (HEFGHFWVAR…VGQRAAIIAA (82 aa)). The active site involves glutamate 23. Histidine 26 serves as a coordination point for Zn(2+). The helical transmembrane segment at 104–124 (GPVANFIFAIFAYWLVFIIGV) threads the bilayer. 2 PDZ domains span residues 115 to 186 (AYWL…APFG) and 199 to 291 (HWAF…TPDT). Residues 125-375 (PGVRPVIGEI…QGAGMSAEFG (251 aa)) lie on the Cytoplasmic side of the membrane. The helical transmembrane segment at 376–396 (VIYYLMFLALISVNLGIINLF) threads the bilayer. Residues 397-429 (PLPVLDGGHLLFLAIEKLKGGPVSERVQDFSYR) are Periplasmic-facing. A helical membrane pass occupies residues 430-450 (IGSILLVLLMGLALFNDFSRL).

The protein belongs to the peptidase M50B family. The cofactor is Zn(2+).

It localises to the cell inner membrane. Its function is as follows. A site-2 regulated intramembrane protease that cleaves the peptide bond between 'Ala-108' and 'Cys-109' in the transmembrane region of RseA. Part of a regulated intramembrane proteolysis (RIP) cascade. Acts on DegS-cleaved RseA to release the cytoplasmic domain of RseA. This provides the cell with sigma-E (RpoE) activity through the proteolysis of RseA. The chain is Regulator of sigma-E protease RseP (rsep) from Salmonella typhimurium (strain 14028s / SGSC 2262).